Consider the following 136-residue polypeptide: DNA-binding protein H-NS (136 aa).

Positions 13–67 form a coiled coil; that stretch reads TLRAQARECTLETLEEMLEKLEVVVNERREEDSQAQAEIEERTRKLQQYREMLIA. The DNA-binding element occupies 113–118; the sequence is QGRTPA.

This sequence belongs to the histone-like protein H-NS family. As to quaternary structure, interacts with YmoA in the absence of DNA. Homodimer that oligomerizes on DNA into higher-order complexes that form bridges between disparate regions of DNA compacting it. Interacts with YmoA.

The protein localises to the cytoplasm. The protein resides in the nucleoid. In terms of biological role, a DNA-binding protein implicated in transcriptional repression and chromosome organization and compaction. Binds nucleation sites in AT-rich DNA and bridges them, forming higher-order nucleoprotein complexes and condensing the chromosome. As many horizontally transferred genes are AT-rich, it plays a central role in silencing foreign genes. A subset of genes are repressed by H-NS in association with YmoA. Complements a number of hns deficiencies in E.coli; represses the bgl operon, represses hemolysin expression. This chain is DNA-binding protein H-NS, found in Yersinia enterocolitica.